Consider the following 159-residue polypeptide: Transcription elongation factor GreA (159 aa).

The stretch at 45–67 (NAEYHEARKEQSFVEGKIRELQL) forms a coiled coil.

The protein belongs to the GreA/GreB family.

Functionally, necessary for efficient RNA polymerase transcription elongation past template-encoded arresting sites. The arresting sites in DNA have the property of trapping a certain fraction of elongating RNA polymerases that pass through, resulting in locked ternary complexes. Cleavage of the nascent transcript by cleavage factors such as GreA or GreB allows the resumption of elongation from the new 3'terminus. GreA releases sequences of 2 to 3 nucleotides. This chain is Transcription elongation factor GreA, found in Neorickettsia sennetsu (strain ATCC VR-367 / Miyayama) (Ehrlichia sennetsu).